A 306-amino-acid polypeptide reads, in one-letter code: Ribonuclease Z (306 aa).

Zn(2+)-binding residues include histidine 63, histidine 65, aspartate 67, histidine 68, histidine 141, aspartate 211, and histidine 269. Aspartate 67 functions as the Proton acceptor in the catalytic mechanism.

The protein belongs to the RNase Z family. In terms of assembly, homodimer. Zn(2+) is required as a cofactor.

The enzyme catalyses Endonucleolytic cleavage of RNA, removing extra 3' nucleotides from tRNA precursor, generating 3' termini of tRNAs. A 3'-hydroxy group is left at the tRNA terminus and a 5'-phosphoryl group is left at the trailer molecule.. Functionally, zinc phosphodiesterase, which displays some tRNA 3'-processing endonuclease activity. Probably involved in tRNA maturation, by removing a 3'-trailer from precursor tRNA. The protein is Ribonuclease Z of Staphylococcus aureus (strain USA300).